Here is a 111-residue protein sequence, read N- to C-terminus: ATP-dependent Clp protease adapter protein ClpS (111 aa).

This sequence belongs to the ClpS family. As to quaternary structure, binds to the N-terminal domain of the chaperone ClpA.

Involved in the modulation of the specificity of the ClpAP-mediated ATP-dependent protein degradation. This is ATP-dependent Clp protease adapter protein ClpS from Legionella pneumophila (strain Corby).